Reading from the N-terminus, the 196-residue chain is Blue copper protein (196 aa).

An N-terminal signal peptide occupies residues 1–22 (MAGVFKTVTFLVLVFAAVVVFA). A Phytocyanin domain is found at 23–125 (EDYDVGDDTE…GQKLSITVVA (103 aa)). His66 provides a ligand contact to Cu cation. Cys79 and Cys113 form a disulfide bridge. A glycan (N-linked (GlcNAc...) asparagine) is linked at Asn98. The Cu cation site is built by Cys107, His112, and Gln117. Residues 133–173 (TPGAGATPAPGSTPSTGGTTPPTAGGTTTPSGSSGTTTPAG) are disordered. Low complexity predominate over residues 135 to 173 (GAGATPAPGSTPSTGGTTPPTAGGTTTPSGSSGTTTPAG). A lipid anchor (GPI-anchor amidated asparagine) is attached at Asn174. The propeptide at 175–196 (AASSLGGATFLVAFVSAVVALF) is removed in mature form.

It localises to the cell membrane. Its function is as follows. Probably acts as an electron carrier. The polypeptide is Blue copper protein (BCB) (Arabidopsis thaliana (Mouse-ear cress)).